The following is a 120-amino-acid chain: uncharacterized protein (120 aa).

The 118-residue stretch at 3–120 (IRYKKAFEKI…EKCEICHGSE (118 aa)) folds into the N-acetyltransferase domain.

This is an uncharacterized protein from Bacillus methanolicus.